Here is a 609-residue protein sequence, read N- to C-terminus: Alpha-glycerophosphate oxidase (609 aa).

Residue 21 to 49 (DLLVIGGGITGAGLTLQAAAAGMKVAVLE) coordinates FAD.

Belongs to the FAD-dependent glycerol-3-phosphate dehydrogenase family. Requires FAD as cofactor.

It localises to the cytoplasm. It carries out the reaction sn-glycerol 3-phosphate + O2 = dihydroxyacetone phosphate + H2O2. The sequence is that of Alpha-glycerophosphate oxidase (glpO) from Lactococcus lactis subsp. lactis (strain IL1403) (Streptococcus lactis).